The following is a 20-amino-acid chain: Alkaline phosphatase (20 aa).

Residues threonine 1–threonine 20 form a disordered region.

In terms of assembly, homodimer; may be disulfide-linked. In terms of processing, the N-terminus is blocked.

It catalyses the reaction a phosphate monoester + H2O = an alcohol + phosphate. Completely inhibited by thiol-reducing agents, such as DTT and 2-mercaptoethanol. Activity was also inhibited by sodium orthovanadate, sodium molybdate, N-ethylmaleimide, EDTA and zinc ion, but was not inhibited by okadaic acid. In terms of biological role, acts against tyrosine-phosphatases. In Prevotella intermedia, this protein is Alkaline phosphatase.